Here is a 653-residue protein sequence, read N- to C-terminus: Acetyl-coenzyme A synthetase (653 aa).

CoA is bound by residues 195–198 (RGGK) and Thr314. Residues 390-392 (GEP), 414-419 (DTWWQT), Asp505, and Arg520 each bind ATP. Ser528 serves as a coordination point for CoA. Arg531 contacts ATP. Mg(2+) contacts are provided by Val542 and Val547. Lys617 is subject to N6-acetyllysine.

The protein belongs to the ATP-dependent AMP-binding enzyme family. The cofactor is Mg(2+). Acetylated. Deacetylation by the SIR2-homolog deacetylase activates the enzyme.

The enzyme catalyses acetate + ATP + CoA = acetyl-CoA + AMP + diphosphate. Functionally, catalyzes the conversion of acetate into acetyl-CoA (AcCoA), an essential intermediate at the junction of anabolic and catabolic pathways. AcsA undergoes a two-step reaction. In the first half reaction, AcsA combines acetate with ATP to form acetyl-adenylate (AcAMP) intermediate. In the second half reaction, it can then transfer the acetyl group from AcAMP to the sulfhydryl group of CoA, forming the product AcCoA. This is Acetyl-coenzyme A synthetase from Pasteurella multocida (strain Pm70).